The primary structure comprises 427 residues: Chitin disaccharide deacetylase (427 aa).

Positions 1–22 (MKLNKLAIATLVSAALSQYAFA) are cleaved as a signal peptide. A NodB homology domain is found at 28–326 (GTIYLTFDDG…LAKQAGYVFD (299 aa)). 2 consecutive Chitin-binding type-3 domains span residues 333–375 (PNWQ…SSLW) and 382–419 (TNWT…TPNS).

The protein belongs to the polysaccharide deacetylase family. Carbohydrate-binding module 12 subfamily.

The enzyme catalyses N,N'-diacetylchitobiose + H2O = N-acetyl-beta-D-glucosaminyl-(1-&gt;4)-D-glucosamine + acetate. It participates in glycan degradation; chitin degradation. Its function is as follows. Specifically catalyzes the degradation of N,N'-diacetylchitobiose. Key enzyme in the chitin catabolic cascade. The polypeptide is Chitin disaccharide deacetylase (deaA) (Vibrio alginolyticus).